The chain runs to 87 residues: Dynein light chain 1, cytoplasmic (87 aa).

Belongs to the dynein light chain family. In terms of assembly, homodimer. Cytoplasmic dynein consists of two catalytic heavy chains (HCs) and a number of non-catalytic subunits which present intermediate chains (ICs), light intermediate chains (LICs) and light chains (LCs). Component of the nuclear pore complex (NPC). NPC constitutes the exclusive means of nucleocytoplasmic transport. NPCs allow the passive diffusion of ions and small molecules and the active, nuclear transport receptor-mediated bidirectional transport of macromolecules such as proteins, RNAs, ribonucleoparticles (RNPs), and ribosomal subunits across the nuclear envelope. Due to its 8-fold rotational symmetry, all subunits are present with 8 copies or multiples thereof.

It is found in the cytoplasm. The protein localises to the cytoskeleton. Its subcellular location is the nucleus. The protein resides in the nuclear pore complex. Functionally, acts as one of several non-catalytic accessory components of the cytoplasmic dynein complex that are thought to be involved in linking dynein to cargos and to adapter proteins that regulate dynein function. Cytoplasmic dynein 1 acts as a motor for the intracellular retrograde motility of vesicles and organelles along microtubules. May play a role in changing or maintaining the spatial distribution of cytoskeletal structures. Also a component of the nuclear pore complex. In Kluyveromyces lactis (strain ATCC 8585 / CBS 2359 / DSM 70799 / NBRC 1267 / NRRL Y-1140 / WM37) (Yeast), this protein is Dynein light chain 1, cytoplasmic (DYN2).